A 138-amino-acid polypeptide reads, in one-letter code: Nucleoside diphosphate kinase (138 aa).

Residues Lys9, Phe57, Arg85, Thr91, Arg102, and Asn112 each contribute to the ATP site. Catalysis depends on His115, which acts as the Pros-phosphohistidine intermediate.

Belongs to the NDK family. As to quaternary structure, homotetramer. The cofactor is Mg(2+).

It localises to the cytoplasm. The catalysed reaction is a 2'-deoxyribonucleoside 5'-diphosphate + ATP = a 2'-deoxyribonucleoside 5'-triphosphate + ADP. It carries out the reaction a ribonucleoside 5'-diphosphate + ATP = a ribonucleoside 5'-triphosphate + ADP. In terms of biological role, major role in the synthesis of nucleoside triphosphates other than ATP. The ATP gamma phosphate is transferred to the NDP beta phosphate via a ping-pong mechanism, using a phosphorylated active-site intermediate. The protein is Nucleoside diphosphate kinase of Trichlorobacter lovleyi (strain ATCC BAA-1151 / DSM 17278 / SZ) (Geobacter lovleyi).